The primary structure comprises 539 residues: DNA damage-binding protein CMR1 (539 aa).

The tract at residues 22 to 89 (LNLPTEAKKE…ALKQEDLGGS (68 aa)) is disordered. Positions 27-39 (EAKKESVDPEVAP) are enriched in basic and acidic residues. WD repeat units follow at residues 182–223 (VTKE…EPLQ), 226–268 (LHHA…DVLD), 316–356 (LGEK…TART), 377–415 (NSRL…LDML), 462–505 (GRWV…LAHL), and 508–539 (ALMT…YWWE).

This sequence belongs to the WD repeat DDB2/WDR76 family.

Its function is as follows. DNA-binding protein that binds to both single- and double-stranded DNA. Binds preferentially to UV-damaged DNA. May be involved in DNA-metabolic processes. The sequence is that of DNA damage-binding protein CMR1 from Yarrowia lipolytica (strain CLIB 122 / E 150) (Yeast).